A 239-amino-acid chain; its full sequence is Large ribosomal subunit protein uL1 (239 aa).

This sequence belongs to the universal ribosomal protein uL1 family. As to quaternary structure, part of the 50S ribosomal subunit.

In terms of biological role, binds directly to 23S rRNA. The L1 stalk is quite mobile in the ribosome, and is involved in E site tRNA release. Functionally, protein L1 is also a translational repressor protein, it controls the translation of the L11 operon by binding to its mRNA. This is Large ribosomal subunit protein uL1 from Acidothermus cellulolyticus (strain ATCC 43068 / DSM 8971 / 11B).